Consider the following 749-residue polypeptide: 5-methyltetrahydropteroyltriglutamate--homocysteine methyltransferase (749 aa).

Residues 15–18 (RELK) and Lys-114 each bind 5-methyltetrahydropteroyltri-L-glutamate. Residues 425 to 427 (IGS) and Glu-478 contribute to the L-homocysteine site. L-methionine is bound by residues 425–427 (IGS) and Glu-478. Trp-555 provides a ligand contact to 5-methyltetrahydropteroyltri-L-glutamate. An L-homocysteine-binding site is contributed by Asp-593. Asp-593 is an L-methionine binding site. A 5-methyltetrahydropteroyltri-L-glutamate-binding site is contributed by Glu-599. Positions 636, 638, and 660 each coordinate Zn(2+). His-689 functions as the Proton donor in the catalytic mechanism. Residue Cys-721 coordinates Zn(2+).

The protein belongs to the vitamin-B12 independent methionine synthase family. Requires Zn(2+) as cofactor.

It catalyses the reaction 5-methyltetrahydropteroyltri-L-glutamate + L-homocysteine = tetrahydropteroyltri-L-glutamate + L-methionine. Its pathway is amino-acid biosynthesis; L-methionine biosynthesis via de novo pathway; L-methionine from L-homocysteine (MetE route): step 1/1. In terms of biological role, catalyzes the transfer of a methyl group from 5-methyltetrahydrofolate to homocysteine resulting in methionine formation. The polypeptide is 5-methyltetrahydropteroyltriglutamate--homocysteine methyltransferase (Streptococcus pneumoniae serotype 4 (strain ATCC BAA-334 / TIGR4)).